A 331-amino-acid polypeptide reads, in one-letter code: 6-phosphogluconolactonase (331 aa).

Residue lysine 287 is modified to N6-acetyllysine.

The protein belongs to the cycloisomerase 2 family.

The catalysed reaction is 6-phospho-D-glucono-1,5-lactone + H2O = 6-phospho-D-gluconate + H(+). Its pathway is carbohydrate degradation; pentose phosphate pathway; D-ribulose 5-phosphate from D-glucose 6-phosphate (oxidative stage): step 2/3. In terms of biological role, catalyzes the hydrolysis of 6-phosphogluconolactone to 6-phosphogluconate. The protein is 6-phosphogluconolactonase of Escherichia coli O8 (strain IAI1).